We begin with the raw amino-acid sequence, 201 residues long: Phosphoprotein (201 aa).

Residues 1–70 (MATRPSSLVD…DQRTGREQLS (70 aa)) form a disordered region. 2 consecutive short sequence motifs (nuclear localization signal) follow at residues 29 to 36 (PRPRKIPR) and 181 to 193 (PPRI…SAPT).

In terms of assembly, homomultimer; only active in its oligomeric state. Interacts with nucleoprotein/N. Interacts with matrix/M protein. Interacts with host TBK1. Interacts with polymerase L. Interacts with host HMGB1; this interaction is required to stabilize RNP on chromosomes. Phosphorylated by host PKC epsilon and casein kinase II.

The protein resides in the host nucleus. It is found in the host cytoplasm. Its function is as follows. Essential component of the RNA polymerase transcription and replication complex. Acts as a scaffold which brings L in close proximity to the N-RNA complex. Plays a role in the segregation of the viral genome in host daughter cells during mitosis by interacting with host HMGB1, a host chromatin-remodeling DNA architectural protein, thereby stabilizing RNP on chromosomes. Interacts with host TBK1 and thus interferes with activation of cellular antiviral state. Inhibits cellular histone acetyltransferase activities. This Bos taurus (Bovine) protein is Phosphoprotein (P/X).